The following is a 345-amino-acid chain: Methionine import ATP-binding protein MetN 4 (345 aa).

The region spanning 2–241 is the ABC transporter domain; it reads IELTNITKTF…PQLRTTKRFV (240 aa). 38–45 contacts ATP; sequence GYSGAGKS.

It belongs to the ABC transporter superfamily. Methionine importer (TC 3.A.1.24) family. The complex is composed of two ATP-binding proteins (MetN), two transmembrane proteins (MetI) and a solute-binding protein (MetQ).

It is found in the cell membrane. The enzyme catalyses L-methionine(out) + ATP + H2O = L-methionine(in) + ADP + phosphate + H(+). It carries out the reaction D-methionine(out) + ATP + H2O = D-methionine(in) + ADP + phosphate + H(+). In terms of biological role, part of the ABC transporter complex MetNIQ involved in methionine import. Responsible for energy coupling to the transport system. The polypeptide is Methionine import ATP-binding protein MetN 4 (Oceanobacillus iheyensis (strain DSM 14371 / CIP 107618 / JCM 11309 / KCTC 3954 / HTE831)).